The sequence spans 760 residues: Xaa-Pro dipeptidyl-peptidase (760 aa).

Active-site charge relay system residues include serine 349, aspartate 469, and histidine 499.

Belongs to the peptidase S15 family. In terms of assembly, homodimer.

The protein resides in the cytoplasm. It carries out the reaction Hydrolyzes Xaa-Pro-|- bonds to release unblocked, N-terminal dipeptides from substrates including Ala-Pro-|-p-nitroanilide and (sequentially) Tyr-Pro-|-Phe-Pro-|-Gly-Pro-|-Ile.. Its function is as follows. Removes N-terminal dipeptides sequentially from polypeptides having unsubstituted N-termini provided that the penultimate residue is proline. The protein is Xaa-Pro dipeptidyl-peptidase of Streptococcus pyogenes serotype M2 (strain MGAS10270).